Here is a 179-residue protein sequence, read N- to C-terminus: Inner membrane-spanning protein YciB (179 aa).

5 helical membrane-spanning segments follow: residues Ile-22–Val-42, Met-50–Asn-70, Trp-76–Met-96, Leu-121–Leu-141, and Phe-149–Ile-169.

The protein belongs to the YciB family.

It is found in the cell inner membrane. In terms of biological role, plays a role in cell envelope biogenesis, maintenance of cell envelope integrity and membrane homeostasis. This Klebsiella pneumoniae (strain 342) protein is Inner membrane-spanning protein YciB.